Consider the following 123-residue polypeptide: MARIAGVDLPRDKRVEIALTYIYGIGKPTSQKILAQSGVNPDTRVRNLTEEEINKLRDIIEKNYKVEGDLRREVALNIKRLIEIGCYRGLRHRRGLPVRGQRTKTNARTRKGPRKTVGVRRKK.

The disordered stretch occupies residues 97-123; sequence PVRGQRTKTNARTRKGPRKTVGVRRKK.

Belongs to the universal ribosomal protein uS13 family. Part of the 30S ribosomal subunit. Forms a loose heterodimer with protein S19. Forms two bridges to the 50S subunit in the 70S ribosome.

Its function is as follows. Located at the top of the head of the 30S subunit, it contacts several helices of the 16S rRNA. In the 70S ribosome it contacts the 23S rRNA (bridge B1a) and protein L5 of the 50S subunit (bridge B1b), connecting the 2 subunits; these bridges are implicated in subunit movement. Contacts the tRNAs in the A and P-sites. The polypeptide is Small ribosomal subunit protein uS13 (Pelotomaculum thermopropionicum (strain DSM 13744 / JCM 10971 / SI)).